The following is a 192-amino-acid chain: Der GTPase-activating protein YihI (192 aa).

The segment at M1–P80 is disordered. Composition is skewed to basic and acidic residues over residues R9 to Q25, T37 to E48, and D65 to P80.

It belongs to the YihI family. As to quaternary structure, interacts with Der.

Functionally, a GTPase-activating protein (GAP) that modifies Der/EngA GTPase function. May play a role in ribosome biogenesis. In Actinobacillus pleuropneumoniae serotype 7 (strain AP76), this protein is Der GTPase-activating protein YihI.